Reading from the N-terminus, the 426-residue chain is UPF0761 membrane protein Nmul_A0452 (426 aa).

6 helical membrane passes run 48 to 68, 106 to 126, 145 to 165, 187 to 207, 217 to 237, and 255 to 275; these read LLSL…FPAF, LTAI…LTID, LLIY…SLSL, LLRL…YLIV, AIAG…GFAF, and IPIF…GAVI.

The protein belongs to the UPF0761 family.

The protein localises to the cell inner membrane. This chain is UPF0761 membrane protein Nmul_A0452, found in Nitrosospira multiformis (strain ATCC 25196 / NCIMB 11849 / C 71).